Here is a 320-residue protein sequence, read N- to C-terminus: Protein PR73 (320 aa).

Topologically, residues Met1–Asp44 are cytoplasmic. The chain crosses the membrane as a helical span at residues Ile45–Val65. Over Ala66–Tyr319 the chain is Extracellular. Residues Asn79, Asn89, Asn93, Asn131, and Asn146 are each glycosylated (N-linked (GlcNAc...) asparagine; by host).

This sequence belongs to the mouse mammary tumor virus PR73 superantigen family.

It localises to the membrane. Superantigen. In Mouse mammary tumor virus (strain BR6) (MMTV), this protein is Protein PR73.